A 148-amino-acid polypeptide reads, in one-letter code: Small ribosomal subunit protein eS19G (148 aa).

It belongs to the eukaryotic ribosomal protein eS19 family.

Elimination of the ALEP-1 gene from all somatic cells in its fully activate state may represent an alternative way to gene regulation. The protein is Small ribosomal subunit protein eS19G (RPS19G) of Ascaris suum (Pig roundworm).